The sequence spans 132 residues: Ribosome-binding factor A (132 aa).

This sequence belongs to the RbfA family. In terms of assembly, monomer. Binds 30S ribosomal subunits, but not 50S ribosomal subunits or 70S ribosomes.

The protein resides in the cytoplasm. Its function is as follows. One of several proteins that assist in the late maturation steps of the functional core of the 30S ribosomal subunit. Associates with free 30S ribosomal subunits (but not with 30S subunits that are part of 70S ribosomes or polysomes). Required for efficient processing of 16S rRNA. May interact with the 5'-terminal helix region of 16S rRNA. The chain is Ribosome-binding factor A from Bordetella avium (strain 197N).